A 405-amino-acid chain; its full sequence is L-carnitine CoA-transferase (405 aa).

CoA contacts are provided by Lys97 and Arg104. Residue Asp169 is the Nucleophile of the active site.

The protein belongs to the CoA-transferase III family. CaiB subfamily. As to quaternary structure, homodimer.

It is found in the cytoplasm. The enzyme catalyses crotonobetainyl-CoA + (R)-carnitine = crotonobetaine + (R)-carnitinyl-CoA. It carries out the reaction 4-(trimethylamino)butanoyl-CoA + (R)-carnitine = (R)-carnitinyl-CoA + 4-(trimethylamino)butanoate. It participates in amine and polyamine metabolism; carnitine metabolism. In terms of biological role, catalyzes the reversible transfer of the CoA moiety from gamma-butyrobetainyl-CoA to L-carnitine to generate L-carnitinyl-CoA and gamma-butyrobetaine. Is also able to catalyze the reversible transfer of the CoA moiety from gamma-butyrobetainyl-CoA or L-carnitinyl-CoA to crotonobetaine to generate crotonobetainyl-CoA. The sequence is that of L-carnitine CoA-transferase from Escherichia coli O139:H28 (strain E24377A / ETEC).